We begin with the raw amino-acid sequence, 178 residues long: Caveolin-1 (178 aa).

Position 2 is an N-acetylserine (Ser2). Ser2 carries the post-translational modification Phosphoserine. Residues 2-94 (SGGKYVDAEG…WKASFTTFTV (93 aa)) are required for homooligomerization. Residues 2-104 (SGGKYVDAEG…TKYWFYRLLS (103 aa)) lie on the Cytoplasmic side of the membrane. Position 5 is an N6-acetyllysine; alternate (Lys5). Lys5 participates in a covalent cross-link: Glycyl lysine isopeptide (Lys-Gly) (interchain with G-Cter in ubiquitin); alternate. The residue at position 6 (Tyr6) is a Phosphotyrosine. A Phosphotyrosine; by ABL1 modification is found at Tyr14. Position 25 is a phosphotyrosine (Tyr25). Glycyl lysine isopeptide (Lys-Gly) (interchain with G-Cter in ubiquitin) cross-links involve residues Lys26, Lys30, Lys39, Lys47, and Lys57. The tract at residues 82–94 (DGIWKASFTTFTV) is interaction with CAVIN3. Positions 105-125 (ALLGIPLALLWGIYFAILSFL) form an intramembrane region, helical. The Cytoplasmic portion of the chain corresponds to 126-178 (HIWAVVPCIRSYLIEIQCISRVYSICIHTFCDPLFEAIGKVFSNIRATVQKEI). The interval 131 to 142 (VPCIRSYLIEIQ) is interacts with SPRY1, SPRY2, SPRY3 and SPRY4. 3 S-palmitoyl cysteine lipidation sites follow: Cys133, Cys143, and Cys156. The interval 149–160 (SICIHTFCDPLF) is interacts with SPRY1, SPRY2, and SPRY4. The interval 167–178 (FSNIRATVQKEI) is interacts with SPRY1, SPRY2, SPRY3 and SPRY4.

This sequence belongs to the caveolin family. In terms of assembly, homooligomer. Interacts with GLIPR2. Interacts with NOSTRIN. Interacts with SNAP25 and STX1A. Interacts (via the N-terminus) with DPP4; the interaction is direct. Interacts with CTNNB1, CDH1 and JUP. Interacts with PACSIN2; this interaction induces membrane tubulation. Interacts with SLC7A9. Interacts with BMX and BTK. Interacts with TGFBR1. Interacts with CAVIN3 (via leucine-zipper domain) in a cholesterol-sensitive manner. Interacts with CAVIN1. Interacts with EHD2 in a cholesterol-dependent manner. Forms a ternary complex with UBXN6 and VCP; mediates CAV1 targeting to lysosomes for degradation. Interacts with ABCG1; this interaction regulates ABCG1-mediated cholesterol efflux. Interacts with NEU3; this interaction enhances NEU3 sialidase activity within caveola. Interacts (via C-terminus) with SPRY1, SPRY2 (via C-terminus), SPRY3, and SPRY4. Interacts with IGFBP5; this interaction allows trafficking of IGFBP5 from the plasma membrane to the nucleus. Post-translationally, phosphorylated at Tyr-14 by ABL1 in response to oxidative stress. Ubiquitinated. Undergo monoubiquitination and multi- and/or polyubiquitination. Monoubiquitination of N-terminal lysines promotes integration in a ternary complex with UBXN6 and VCP which promotes oligomeric CAV1 targeting to lysosomes for degradation. Ubiquitinated by ZNRF1; leading to degradation and modulation of the TLR4-mediated immune response.

The protein localises to the golgi apparatus membrane. Its subcellular location is the cell membrane. It is found in the membrane. The protein resides in the caveola. It localises to the membrane raft. Functionally, may act as a scaffolding protein within caveolar membranes. Forms a stable heterooligomeric complex with CAV2 that targets to lipid rafts and drives caveolae formation. Mediates the recruitment of CAVIN proteins (CAVIN1/2/3/4) to the caveolae. Interacts directly with G-protein alpha subunits and can functionally regulate their activity. Involved in the costimulatory signal essential for T-cell receptor (TCR)-mediated T-cell activation. Its binding to DPP4 induces T-cell proliferation and NF-kappa-B activation in a T-cell receptor/CD3-dependent manner. Recruits CTNNB1 to caveolar membranes and may regulate CTNNB1-mediated signaling through the Wnt pathway. Negatively regulates TGFB1-mediated activation of SMAD2/3 by mediating the internalization of TGFBR1 from membrane rafts leading to its subsequent degradation. Binds 20(S)-hydroxycholesterol (20(S)-OHC). In Ornithorhynchus anatinus (Duckbill platypus), this protein is Caveolin-1 (CAV1).